The chain runs to 189 residues: Thioredoxin-like protein CITRX, chloroplastic (189 aa).

The N-terminal 56 residues, 1-56 (MAMAAAASLLPASAAPTLPGRAFRPPRNSTPTASLSCDGGSRCRGVGLGVILGGCR), are a transit peptide targeting the chloroplast. Positions 72–189 (GSGKYIAPDY…MIRNIIDNEL (118 aa)) constitute a Thioredoxin domain. Residues Cys-112 and Cys-115 each act as nucleophile in the active site. Cys-112 and Cys-115 are oxidised to a cystine.

The protein belongs to the thioredoxin family. Plant CITRX-type subfamily.

It is found in the plastid. Its subcellular location is the chloroplast. Functionally, probable thiol-disulfide oxidoreductase that may play a role in proper chloroplast development. This chain is Thioredoxin-like protein CITRX, chloroplastic, found in Oryza sativa subsp. japonica (Rice).